Reading from the N-terminus, the 113-residue chain is Protein AV2 (113 aa).

The segment at 94-113 (SKTGLGEQAHVQKAHDVQDV) is disordered.

It belongs to the geminiviridae protein AV2/V2 family. As to quaternary structure, interacts with host SGS3.

It localises to the host cytoplasm. Its subcellular location is the host perinuclear region. Functionally, through its interaction with host SGS3, acts as a suppressor of RNA-mediated gene silencing, also known as post-transcriptional gene silencing (PTGS), a mechanism of plant viral defense that limits the accumulation of viral RNAs. This chain is Protein AV2, found in African cassava mosaic virus (isolate West Kenyan 844) (ACMV).